The following is a 602-amino-acid chain: Isocyanide synthase A (602 aa).

It belongs to the isocyanide synthase family.

In terms of biological role, isocyanide synthase involved in the biosynthesis of isocyanides (or isonitriles), a class of microbial secondary metabolites. The presence of an isonitrile moiety within a compound imparts unique biological (cytotoxic, antibacterial, and antiprotozoal) and chemical (transition metal coordination) properties and enables synthetic and biochemical applications. This chain is Isocyanide synthase A, found in Aspergillus fumigatus (strain ATCC MYA-4609 / CBS 101355 / FGSC A1100 / Af293) (Neosartorya fumigata).